The primary structure comprises 525 residues: 2,3-bisphosphoglycerate-independent phosphoglycerate mutase (525 aa).

Mn(2+) is bound by residues Asp15 and Ser65. Ser65 acts as the Phosphoserine intermediate in catalysis. Substrate contacts are provided by residues His126, 156 to 157 (RD), Arg188, Arg194, 258 to 261 (RPDR), and Lys331. Asp398, His402, Asp439, His440, and His457 together coordinate Mn(2+).

This sequence belongs to the BPG-independent phosphoglycerate mutase family. As to quaternary structure, monomer. It depends on Mn(2+) as a cofactor.

The enzyme catalyses (2R)-2-phosphoglycerate = (2R)-3-phosphoglycerate. It participates in carbohydrate degradation; glycolysis; pyruvate from D-glyceraldehyde 3-phosphate: step 3/5. In terms of biological role, catalyzes the interconversion of 2-phosphoglycerate and 3-phosphoglycerate. The chain is 2,3-bisphosphoglycerate-independent phosphoglycerate mutase from Picosynechococcus sp. (strain ATCC 27264 / PCC 7002 / PR-6) (Agmenellum quadruplicatum).